Here is a 175-residue protein sequence, read N- to C-terminus: Flagellar assembly factor FliW (175 aa).

The protein belongs to the FliW family. As to quaternary structure, interacts with translational regulator CsrA and flagellin(s).

Its subcellular location is the cytoplasm. Acts as an anti-CsrA protein, binds CsrA and prevents it from repressing translation of its target genes, one of which is flagellin. Binds to flagellin and participates in the assembly of the flagellum. The polypeptide is Flagellar assembly factor FliW (Bdellovibrio bacteriovorus (strain ATCC 15356 / DSM 50701 / NCIMB 9529 / HD100)).